The following is a 374-amino-acid chain: Ribosomal RNA large subunit methyltransferase G (374 aa).

This sequence belongs to the methyltransferase superfamily. RlmG family.

It localises to the cytoplasm. It carries out the reaction guanosine(1835) in 23S rRNA + S-adenosyl-L-methionine = N(2)-methylguanosine(1835) in 23S rRNA + S-adenosyl-L-homocysteine + H(+). Its function is as follows. Specifically methylates the guanine in position 1835 (m2G1835) of 23S rRNA. This chain is Ribosomal RNA large subunit methyltransferase G, found in Pseudomonas syringae pv. syringae (strain B728a).